A 598-amino-acid polypeptide reads, in one-letter code: Leucine aminopeptidase 2, chloroplastic (598 aa).

Residues methionine 1–alanine 71 constitute a chloroplast transit peptide. Positions 367 and 372 each coordinate Mn(2+). Lysine 379 is an active-site residue. Residues aspartate 392, aspartate 452, and glutamate 454 each coordinate Mn(2+). Residue arginine 456 is part of the active site.

It belongs to the peptidase M17 family. Homohexamer (dimer of homotrimers). The cofactor is Mn(2+).

It localises to the plastid. The protein resides in the chloroplast. The enzyme catalyses Release of an N-terminal amino acid, Xaa-|-Yaa-, in which Xaa is preferably Leu, but may be other amino acids including Pro although not Arg or Lys, and Yaa may be Pro. Amino acid amides and methyl esters are also readily hydrolyzed, but rates on arylamides are exceedingly low.. The catalysed reaction is Release of N-terminal proline from a peptide.. Presumably involved in the processing and regular turnover of intracellular proteins. Catalyzes the removal of unsubstituted N-terminal amino acids from various peptides. The chain is Leucine aminopeptidase 2, chloroplastic from Oryza sativa subsp. japonica (Rice).